The following is a 719-amino-acid chain: Putative alpha-1,3-mannosyltransferase MNT4 (719 aa).

Topologically, residues 1–4 (MKFH) are cytoplasmic. A helical membrane pass occupies residues 5–22 (LKRYVIVTSILLSFFLLF). Residues 23-719 (RRQFLPLTQR…KKLIEIWLQD (697 aa)) are Lumenal-facing. Asn148, Asn273, and Asn449 each carry an N-linked (GlcNAc...) asparagine glycan.

It belongs to the MNN1/MNT family.

The protein localises to the golgi apparatus membrane. It functions in the pathway protein modification; protein glycosylation. Its function is as follows. Responsible for addition of the terminal mannose residues to the outer chain of core N-linked polysaccharides and to O-linked mannotriose. Implicated in late Golgi modifications. The sequence is that of Putative alpha-1,3-mannosyltransferase MNT4 (MNT4) from Candida albicans (strain SC5314 / ATCC MYA-2876) (Yeast).